A 91-amino-acid chain; its full sequence is Small ribosomal subunit protein uS19 (91 aa).

The protein belongs to the universal ribosomal protein uS19 family.

Functionally, protein S19 forms a complex with S13 that binds strongly to the 16S ribosomal RNA. This Ectopseudomonas mendocina (strain ymp) (Pseudomonas mendocina) protein is Small ribosomal subunit protein uS19.